A 266-amino-acid chain; its full sequence is Integral membrane protein 2B (266 aa).

Topologically, residues 1 to 54 are cytoplasmic; the sequence is MVKVTFNSALAQKEAKKDESKSGEEALIIPPDAVAVDCKDPDEVVPVGQRRAWC. Residues 55–75 traverse the membrane as a helical; Signal-anchor for type II membrane protein segment; sequence WCMCFGLAFMLAGVILGGAYL. Topologically, residues 76-266 are lumenal; sequence YKYFAFQPDD…RFAVETLICP (191 aa). The interval 102–134 is necessary for interaction with APP and inhibitor effects on APP processing; the sequence is EPSADAPASRYQTIEENIKIFEEDEVEFISVPV. The 95-residue stretch at 137 to 231 folds into the BRICHOS domain; sequence FADSDPANIV…LCHDKETYKL (95 aa). 2 cysteine pairs are disulfide-bonded: Cys-164–Cys-223 and Cys-248–Cys-265. The N-linked (GlcNAc...) asparagine glycan is linked to Asn-170.

Belongs to the ITM2 family. In terms of assembly, homodimer; disulfide-linked. Interacts with SPPL2A and SPPL2B. Interacts with APP. Mature BRI2 (mBRI2) interacts with the APP amyloid-beta A4 protein; the interaction occurs at the cell surface and in the endocytic compartments and enable alpha- and beta-secretase-induced APP cleavage inhibition. Mature BRI2 (mBRI2) interacts with the APP C99; the interaction occurs in the endocytic compartments and enable gamma-secretase-induced C99 cleavage inhibition. May form heterodimers with Bri23 peptide and APP amyloid-beta protein 40. Interacts with ADAM7 in sperm; the interaction increases following capacitation. Post-translationally, the ectodomain C-terminal part of the imBRI2 is processed by furin producing a secreted Bri23 peptide and a mature BRI2, membrane form (mBRI2). The remaining part of the ectodomain of mBRI2 containing the BRICHOS domain is cleaved by ADAM10 and is secreted (BRI2C, soluble form). The membrane-bound N-terminal fragment (BRI2C, membrane form) is further proteolytically processed by SPPL2A and SPPL2B through regulated intramembrane proteolysis producing a secreted C-peptide and a BRI2 intracellular domain (BRI2 ICD) released in the cytosol. Shedding by ADAM10 facilitates intramembrane cleavage but is not absolutely required for BRI2 ICD generation. Glycosylation at Asn-170 is important for cell surface localization, but doesn't affect furin- and ADAM10-induced proteolytic processing.

It localises to the golgi apparatus membrane. Its subcellular location is the cell membrane. It is found in the endosome membrane. The protein localises to the secreted. In terms of biological role, plays a regulatory role in the processing of the amyloid-beta A4 precursor protein (APP) and acts as an inhibitor of the amyloid-beta peptide aggregation and fibrils deposition. Plays a role in the induction of neurite outgrowth. Functions as a protease inhibitor by blocking access of secretases to APP cleavage sites. Mature BRI2 (mBRI2) functions as a modulator of the amyloid-beta A4 precursor protein (APP) processing leading to a strong reduction in the secretion of secretase-processed amyloid-beta protein 40 and amyloid-beta protein 42. Functionally, bri23 peptide prevents aggregation of APP amyloid-beta protein 42 into toxic oligomers. The chain is Integral membrane protein 2B (ITM2B) from Bos taurus (Bovine).